The following is a 599-amino-acid chain: MALKRVFLLRSVAPRVAALSTKPQAQEQPPASPEALRGCGAAKAVRPPVPAVDFTNTQEAYRSRRSWELVRNLLVLRLCASPVLLAHHEQLFQVARKLLGQRMFERLMKMTFYGHFVAGEDQESIRPLIRHNKAFGVGFILDYGVEEDLSPEEAERKEMESCTSEAERDGSGANKREKQYQVHPAFGDRRDGVISARTYFYANEAKCDNYMENLLQCIKASGGASDGGFSAIKLTALGRPQFLLQFSDVLTRWRRFFHQMAAEQGQAGRAAVDTKLEVAVLQDSIAKMGIASRAEIEGWFTPETLGVSGTVDLLDWNSLIDSRTRLSRHLVVPNVQTGQLEPLLSRFTEEEEQQMKRMLQRMDVLAKKAKEAGVRLMIDAEQSYFQPAISRLTLEMQRRFNVDKPFIFNTFQCYLKDAYDNVTLDMELARREGWCFGAKLVRGAYMAQERVRAAEIGYEDPINPTYEATNAMYHRCLNYVLEELKHSTKAEVMVASHNEDTVHFTLCRMKEIGLHPADGQVCFGQLLGMCDQISFPLGQAGFPVYKYVPYGPVMEVLPYLSRRALENSSIMKGAQRERQLLWQELRRRLRTGSLFHHPA.

Disordered regions lie at residues 20–39 and 152–180; these read STKP…LRGC and EEAE…EKQY. Low complexity predominate over residues 23-39; that stretch reads PQAQEQPPASPEALRGC. Residues 153-180 are compositionally biased toward basic and acidic residues; the sequence is EAERKEMESCTSEAERDGSGANKREKQY. K356, K367, and K485 each carry N6-acetyllysine.

The protein belongs to the proline oxidase family. FAD is required as a cofactor. As to expression, expressed in liver, kidney, heart and to a lesser extent in brain, lung and muscle.

Its subcellular location is the mitochondrion matrix. The catalysed reaction is L-proline + a quinone = (S)-1-pyrroline-5-carboxylate + a quinol + H(+). It participates in amino-acid degradation; L-proline degradation into L-glutamate; L-glutamate from L-proline: step 1/2. Its function is as follows. Converts proline to delta-1-pyrroline-5-carboxylate. This chain is Proline dehydrogenase 1, mitochondrial (Prodh), found in Mus musculus (Mouse).